The sequence spans 529 residues: Cytochrome P450 monooxygenase ausG (529 aa).

A helical transmembrane segment spans residues 31–51; that stretch reads LLVVCGLPGLLLLFFVTAILL. C470 contributes to the heme binding site.

The protein belongs to the cytochrome P450 family. It depends on heme as a cofactor.

The protein resides in the membrane. It participates in secondary metabolite biosynthesis; terpenoid biosynthesis. In terms of biological role, cytochrome P450 monooxygenase; part of the gene cluster that mediates the biosynthesis of calidodehydroaustin, a fungal meroterpenoid. The first step of the pathway is the synthesis of 3,5-dimethylorsellinic acid by the polyketide synthase ausA. 3,5-dimethylorsellinic acid is then prenylated by the polyprenyl transferase ausN. Further epoxidation by the FAD-dependent monooxygenase ausM and cyclization by the probable terpene cyclase ausL lead to the formation of protoaustinoid A. Protoaustinoid A is then oxidized to spiro-lactone preaustinoid A3 by the combined action of the FAD-binding monooxygenases ausB and ausC, and the dioxygenase ausE. Acid-catalyzed keto-rearrangement and ring contraction of the tetraketide portion of preaustinoid A3 by ausJ lead to the formation of preaustinoid A4. The aldo-keto reductase ausK, with the help of ausH, is involved in the next step by transforming preaustinoid A4 into isoaustinone which is in turn hydroxylated by the P450 monooxygenase ausI to form austinolide. The cytochrome P450 monooxygenase ausG modifies austinolide to austinol. Austinol is further acetylated to austin by the O-acetyltransferase ausP, which spontaneously changes to dehydroaustin. The cytochrome P450 monooxygenase ausR then converts dehydroaustin is into 7-dehydrodehydroaustin. The hydroxylation catalyzed by ausR permits the O-acetyltransferase ausQ to add an additional acetyl group to the molecule, leading to the formation of acetoxydehydroaustin. The short chain dehydrogenase ausT catalyzes the reduction of the double bond present between carbon atoms 1 and 2 to convert 7-dehydrodehydroaustin into 1,2-dihydro-7-hydroxydehydroaustin. AusQ catalyzes not only an acetylation reaction but also the addition of the PKS ausV diketide product to 1,2-dihydro-7-hydroxydehydroaustin, forming precalidodehydroaustin. Finally, the iron/alpha-ketoglutarate-dependent dioxygenase converts precalidodehydroaustin into calidodehydroaustin. In Aspergillus calidoustus, this protein is Cytochrome P450 monooxygenase ausG.